A 451-amino-acid polypeptide reads, in one-letter code: uncharacterized protein (451 aa).

In terms of domain architecture, TRAM spans 2–60; that stretch reads VVKVKQKIPLKIKRMGINGEGIGFYQKTLVFVPGALKGEDIFCQITAVKRNFAEAKLLT. [4Fe-4S] cluster contacts are provided by Cys-73, Cys-79, Cys-82, and Cys-162. Gln-283, Tyr-312, Asp-333, and Asp-381 together coordinate S-adenosyl-L-methionine. Cys-408 acts as the Nucleophile in catalysis.

The protein belongs to the class I-like SAM-binding methyltransferase superfamily. RNA M5U methyltransferase family.

This is an uncharacterized protein from Streptococcus pyogenes serotype M1.